A 377-amino-acid polypeptide reads, in one-letter code: MSPPNQSLEGLLQEASNRSLNATETPEAWGPETLQALKISLALLLSIITMATALSNAFVLTTIFLTRKLHTPANYLIGSLAMTDLLVSILVMPISIAYTTTRTWSFGQILCDIWLSSDITCCTASILHLCVIALDRYWAITDALEYSKRRTAGRAAVMIATVWVISICISIPPLFWRQAKAQEDMSDCQVNTSQISYTIYSTCGAFYIPSVLLIILYGRIYVAARNRILNPPSLYGKRFTTAQLITGSAGSSLCSLSPSLQEERSHAAGPPLFFNHVQVKLAEGVLERKRISAARERKATKTLGIILGAFIVCWLPFFVASLVLPICRASCWLHPALFDFFTWLGYLNSLINPIIYTVFNEEFRQAFQRVVHVRKAS.

Residues Asn-5, Asn-17, and Asn-21 are each glycosylated (N-linked (GlcNAc...) asparagine). A run of 3 helical transmembrane segments spans residues 39-64, 76-97, and 110-134; these read ISLA…TTIF, LIGS…ISIA, and LCDI…VIAL. Cys-111 and Cys-188 form a disulfide bridge. Residues Asp-118 and Cys-122 each contribute to the serotonin site. The DRY motif; important for ligand-induced conformation changes signature appears at 135 to 137; it reads DRY. Helical transmembrane passes span 155-176, 195-218, 301-326, and 336-359; these read AAVM…PLFW, ISYT…ILYG, KTLG…VLPI, and ALFD…YTVF. Ser-321 is a binding site for serotonin. The NPxxY motif; important for ligand-induced conformation changes and signaling motif lies at 352–356; it reads NPIIY.

It belongs to the G-protein coupled receptor 1 family. Homodimer. Heterodimer with HTR1B.

Its subcellular location is the cell membrane. G-protein coupled receptor for 5-hydroxytryptamine (serotonin). Also functions as a receptor for ergot alkaloid derivatives, various anxiolytic and antidepressant drugs and other psychoactive substances. Ligand binding causes a conformation change that triggers signaling via guanine nucleotide-binding proteins (G proteins) and modulates the activity of downstream effectors, such as adenylate cyclase. HTR1D is coupled to G(i)/G(o) G alpha proteins and mediates inhibitory neurotransmission by inhibiting adenylate cyclase activity. Regulates the release of 5-hydroxytryptamine in the brain, and thereby affects neural activity. May also play a role in regulating the release of other neurotransmitters. May play a role in vasoconstriction. This chain is 5-hydroxytryptamine receptor 1D (HTR1D), found in Canis lupus familiaris (Dog).